Reading from the N-terminus, the 427-residue chain is Light-independent protochlorophyllide reductase subunit N (427 aa).

[4Fe-4S] cluster-binding residues include cysteine 28, cysteine 53, and cysteine 114.

Belongs to the BchN/ChlN family. In terms of assembly, protochlorophyllide reductase is composed of three subunits; BchL, BchN and BchB. Forms a heterotetramer of two BchB and two BchN subunits. The cofactor is [4Fe-4S] cluster.

It carries out the reaction chlorophyllide a + oxidized 2[4Fe-4S]-[ferredoxin] + 2 ADP + 2 phosphate = protochlorophyllide a + reduced 2[4Fe-4S]-[ferredoxin] + 2 ATP + 2 H2O. Its pathway is porphyrin-containing compound metabolism; bacteriochlorophyll biosynthesis (light-independent). In terms of biological role, component of the dark-operative protochlorophyllide reductase (DPOR) that uses Mg-ATP and reduced ferredoxin to reduce ring D of protochlorophyllide (Pchlide) to form chlorophyllide a (Chlide). This reaction is light-independent. The NB-protein (BchN-BchB) is the catalytic component of the complex. The protein is Light-independent protochlorophyllide reductase subunit N of Dinoroseobacter shibae (strain DSM 16493 / NCIMB 14021 / DFL 12).